Consider the following 56-residue polypeptide: Small ribosomal subunit protein eS31 (56 aa).

Zn(2+) is bound by residues cysteine 28, cysteine 31, cysteine 46, and cysteine 49. The segment at 28-49 adopts a C4-type zinc-finger fold; it reads CPRCGPGVFMANHKDRWSCGRC.

This sequence belongs to the eukaryotic ribosomal protein eS31 family. In terms of assembly, part of the 30S ribosomal subunit. Zn(2+) serves as cofactor.

The sequence is that of Small ribosomal subunit protein eS31 from Thermococcus gammatolerans (strain DSM 15229 / JCM 11827 / EJ3).